Consider the following 205-residue polypeptide: High frequency lysogenization protein HflD homolog (205 aa).

It belongs to the HflD family.

It is found in the cytoplasm. The protein resides in the cell inner membrane. The protein is High frequency lysogenization protein HflD homolog of Shewanella halifaxensis (strain HAW-EB4).